The primary structure comprises 1265 residues: Stromal processing peptidase, chloroplastic (1265 aa).

The N-terminal 143 residues, 1–143 (MASSSSSIFT…SLRKHSQIVN (143 aa)), are a transit peptide targeting the chloroplast. Residue His240 participates in Zn(2+) binding. The active-site Proton acceptor is Glu243. His244 lines the Zn(2+) pocket. Residue Glu314 is part of the active site. Glu321 contributes to the Zn(2+) binding site.

It belongs to the peptidase M16 family. Zn(2+) is required as a cofactor.

It localises to the plastid. The protein resides in the chloroplast stroma. Cleaves presequences (transit peptides) from chloroplastic protein precursors. Initially recognizes a precursor by binding to the C-terminus of its transit peptide and then removes the transit peptide in a single endoproteolytic step. In a next step, pursues the cleavage of transit peptide to a subfragment form. This Arabidopsis thaliana (Mouse-ear cress) protein is Stromal processing peptidase, chloroplastic.